A 508-amino-acid polypeptide reads, in one-letter code: Photosystem II CP47 reaction center protein (508 aa).

Helical transmembrane passes span 21–36 (AVHIMHTALVAGWAGS), 101–115 (IVFSGLCFLAAIWHW), 140–156 (GIHLFLAGVACFGFGAF), 203–218 (IAAGTLGILAGLFHLS), 237–252 (VLSSSIAAVFFAAFVV), and 457–472 (SFALLFFFGHIWHGAR).

The protein belongs to the PsbB/PsbC family. PsbB subfamily. As to quaternary structure, PSII is composed of 1 copy each of membrane proteins PsbA, PsbB, PsbC, PsbD, PsbE, PsbF, PsbH, PsbI, PsbJ, PsbK, PsbL, PsbM, PsbT, PsbX, PsbY, PsbZ, Psb30/Ycf12, at least 3 peripheral proteins of the oxygen-evolving complex and a large number of cofactors. It forms dimeric complexes. It depends on Binds multiple chlorophylls. PSII binds additional chlorophylls, carotenoids and specific lipids. as a cofactor.

It is found in the plastid. Its subcellular location is the chloroplast thylakoid membrane. Functionally, one of the components of the core complex of photosystem II (PSII). It binds chlorophyll and helps catalyze the primary light-induced photochemical processes of PSII. PSII is a light-driven water:plastoquinone oxidoreductase, using light energy to abstract electrons from H(2)O, generating O(2) and a proton gradient subsequently used for ATP formation. This Trachelium caeruleum (Blue throatwort) protein is Photosystem II CP47 reaction center protein.